The primary structure comprises 122 residues: Class I hydrophobin 2 (122 aa).

The signal sequence occupies residues 1–22; it reads MFARVSTLFAMFFLGLALMVSA. Disulfide bonds link Cys40–Cys101, Cys47–Cys95, Cys48–Cys81, and Cys102–Cys115.

Belongs to the fungal hydrophobin family. Self-assembles to form functional amyloid fibrils called rodlets. Self-assembly into fibrillar rodlets occurs spontaneously at hydrophobic:hydrophilic interfaces and the rodlets further associate laterally to form amphipathic monolayers.

It localises to the secreted. It is found in the cell wall. Its function is as follows. Aerial growth, conidiation, and dispersal of filamentous fungi in the environment rely upon a capability of their secreting small amphipathic proteins called hydrophobins (HPBs) with low sequence identity. Class I can self-assemble into an outermost layer of rodlet bundles on aerial cell surfaces, conferring cellular hydrophobicity that supports fungal growth, development and dispersal; whereas Class II form highly ordered films at water-air interfaces through intermolecular interactions but contribute nothing to the rodlet structure. Hah2 is a class I hydrophobin that is involved in aerial growth of mycelia, but does not play a role in pathogenesis. In Heterobasidion annosum (Root rot fungus), this protein is Class I hydrophobin 2.